The following is a 322-amino-acid chain: Hapalindole dimethylallyltransferase (322 aa).

Dimethylallyl diphosphate-binding residues include R46, R60, K115, N166, Y168, R221, Y225, and K275.

The protein belongs to the aromatic prenyltransferase family.

It catalyses the reaction hapalindole G + dimethylallyl diphosphate = ambiguine A + diphosphate. It carries out the reaction hapalindole U + dimethylallyl diphosphate + H(+) = ambiguine H + diphosphate. Activity is slightly increased in the presence of Mg(2+). In terms of biological role, prenyltransferase involved in the biosynthesis of ambiguines, a family of hapalindole-type alkaloids. Catalyzes the reverse prenylation of hapalindole G or U at the C2 position with dimethylallyl diphosphate (DMAPP) to generate ambiguine A or H, respectively. In addition, accepts hapalindole A, an epimer of hapalindole G, and catalyzes normal prenylation at its C2 position. This is Hapalindole dimethylallyltransferase from Fischerella ambigua (strain UTEX 1903).